The sequence spans 247 residues: Orotidine 5'-phosphate decarboxylase (247 aa).

Residues aspartate 22, lysine 44, 71–80 (DLKFHDIPNT), threonine 131, arginine 192, glutamine 201, glycine 221, and arginine 222 contribute to the substrate site. Lysine 73 acts as the Proton donor in catalysis.

It belongs to the OMP decarboxylase family. Type 1 subfamily. Homodimer.

It catalyses the reaction orotidine 5'-phosphate + H(+) = UMP + CO2. It functions in the pathway pyrimidine metabolism; UMP biosynthesis via de novo pathway; UMP from orotate: step 2/2. Its function is as follows. Catalyzes the decarboxylation of orotidine 5'-monophosphate (OMP) to uridine 5'-monophosphate (UMP). The sequence is that of Orotidine 5'-phosphate decarboxylase from Pectobacterium atrosepticum (strain SCRI 1043 / ATCC BAA-672) (Erwinia carotovora subsp. atroseptica).